Here is a 602-residue protein sequence, read N- to C-terminus: Leucine-rich repeat-containing protein 40 (602 aa).

Phosphoserine is present on Ser-71. LRR repeat units lie at residues 83–104 (DLTKLIISNNKLQSLTDDLRLL), 106–127 (ALTVLDIHDNQLTSLPSAIREL), 129–150 (NLQKLNVSHNKLKILPEEITNL), 152–173 (NLKCLYLQHNELTCISEGFEQL), 175–196 (NLEDLDLSNNHLTTVPASFSSL), 198–219 (SLVRLNLSSNELKSLPAEINRM), 221–242 (RLKHLDCNSNLLETIPPELAGM), 244–265 (SLELLYLRRNKLRFLPEFPSCS), 266–286 (LLKELHVGENQIEMLEAEHLK), 290–311 (SILVLDLRDNKLKSVPDEIILL), 313–335 (SLERLDLSNNDISSLPYSLGNLH), 336–356 (LKFLALEGNPLRTIRREIISK), 400–421 (TLKILDYSDKQATLIPDEVFDA), 426–447 (IVTSINFSKNQLCEIPKRMVEL), 450–472 (MVSDVDLSFNKLSFISLELCVLQ), 473–494 (KLTFLDLRNNFLNSLPEEMESL), 496–517 (RLQTINLSFNRFKMLPEVLYRI), 519–540 (TLETILISNNQVGSVDPQKMKM), 543–564 (NLTTLDLQNNDLLQIPPELGNC), and 566–586 (NLRTLLLDGNPFRVPRAAILM).

This chain is Leucine-rich repeat-containing protein 40 (LRRC40), found in Homo sapiens (Human).